The primary structure comprises 412 residues: Divalent metal cation transporter MntH (412 aa).

The next 11 helical transmembrane spans lie at 19–39 (LALM…GNFA), 46–66 (ASFG…AMLI), 94–114 (VWFY…AEFI), 122–142 (LILG…TFLI), 156–176 (VIGG…FFSQ), 196–216 (AVFL…IYLH), 241–261 (IAMT…AAAF), 290–310 (IFGL…TLAG), 322–342 (IPLW…ILMG), 348–368 (ILVM…VPLL), and 392–412 (AIVV…ALGL).

This sequence belongs to the NRAMP family.

The protein resides in the cell inner membrane. Functionally, h(+)-stimulated, divalent metal cation uptake system. The protein is Divalent metal cation transporter MntH of Cronobacter sakazakii (strain ATCC BAA-894) (Enterobacter sakazakii).